The chain runs to 309 residues: uncharacterized protein (309 aa).

6 helical membrane passes run 28 to 48 (IIAL…IMKP), 73 to 93 (MMLN…VIGW), 113 to 133 (LIVI…LLPI), 157 to 177 (ITAF…YFHS), 220 to 240 (FVVI…AALF), and 259 to 279 (IFAV…ILIL).

It is found in the cell membrane. This is an uncharacterized protein from Bacillus subtilis (strain 168).